Consider the following 102-residue polypeptide: Urease subunit beta (102 aa).

The protein belongs to the urease beta subunit family. In terms of assembly, heterotrimer of UreA (gamma), UreB (beta) and UreC (alpha) subunits. Three heterotrimers associate to form the active enzyme.

It is found in the cytoplasm. The enzyme catalyses urea + 2 H2O + H(+) = hydrogencarbonate + 2 NH4(+). The protein operates within nitrogen metabolism; urea degradation; CO(2) and NH(3) from urea (urease route): step 1/1. The sequence is that of Urease subunit beta from Acinetobacter baumannii (strain ACICU).